Here is a 63-residue protein sequence, read N- to C-terminus: Potassium channel toxin Sp4 (63 aa).

An N-terminal signal peptide occupies residues 1 to 20; sequence MNKVHFALFLLVLTVLAVSG. Intrachain disulfides connect C31–C53, C38–C58, and C42–C60.

Belongs to the long chain scorpion toxin family. Class 2 subfamily. Expressed by the venom gland.

The protein localises to the secreted. This recombinant toxin selectively inhibits mouse voltage-gated potassium channel Kv1.3/KCNA3 (IC(50)=24.73 nM). In Scorpiops pococki (Scorpion), this protein is Potassium channel toxin Sp4.